The primary structure comprises 122 residues: UPF0102 protein BQ09720 (122 aa).

The protein belongs to the UPF0102 family.

This chain is UPF0102 protein BQ09720, found in Bartonella quintana (strain Toulouse) (Rochalimaea quintana).